A 1643-amino-acid polypeptide reads, in one-letter code: Neurexin-3 (1643 aa).

A signal peptide spans 1–27 (MSSTLHSVFFTLKVSILLGSLLGLCLG). The Laminin G-like 1 domain occupies 28-202 (LEFMGLPNQW…GVQMDAEGPC (175 aa)). Over 28-1568 (LEFMGLPNQW…EVIRESSSTT (1541 aa)) the chain is Extracellular. Residues N58 and N105 are each glycosylated (N-linked (GlcNAc...) asparagine). Positions 198-235 (AEGPCGERPCENGGICFLLDGHPTCDCSTTGYGGKLCS) constitute an EGF-like 1 domain. 3 cysteine pairs are disulfide-bonded: C202/C213, C207/C222, and C224/C234. Laminin G-like domains follow at residues 258–440 (VATF…VFKC) and 447–639 (DPIN…KSSC). Positions 304, 321, and 374 each coordinate Ca(2+). Cystine bridges form between C404–C440, C610–C639, C647–C658, C652–C667, and C669–C679. The 38-residue stretch at 643–680 (SAKQCDSYPCKNNAVCKDGWNRFICDCTGTGYWGRTCE) folds into the EGF-like 2 domain. Laminin G-like domains are found at residues 685 to 857 (ILSY…IDYC) and 871 to 1046 (DPVT…ERGC). 2 residues coordinate Ca(2+): D732 and L749. The N-linked (GlcNAc...) asparagine glycan is linked to N757. R807 provides a ligand contact to Ca(2+). Disulfide bonds link C1018–C1046, C1053–C1064, C1058–C1073, and C1075–C1085. The 38-residue stretch at 1049–1086 (PSTTCQEDSCANQGVCMQQWEGFTCDCSMTSYSGNQCN) folds into the EGF-like 3 domain. A Laminin G-like 6 domain is found at 1090 to 1260 (ATYIFGKSGG…NPNIKINGSV (171 aa)). 2 residues coordinate Ca(2+): D1142 and I1159. An N-linked (GlcNAc...) asparagine glycan is attached at N1189. Residues I1211 and N1213 each coordinate Ca(2+). N1257 and N1301 each carry an N-linked (GlcNAc...) asparagine glycan. Residues 1294–1318 (ATTTTRKNRSTASIQPTSDDLVSSA) are disordered. Over residues 1303 to 1318 (STASIQPTSDDLVSSA) the composition is skewed to polar residues. An O-linked (Xyl...) (heparan sulfate) serine glycan is attached at S1317. The helical transmembrane segment at 1569–1589 (GMVVGIVAAAALCILILLYAM) threads the bilayer. At 1590–1643 (YKYRNRDEGSYQVDETRNYISNSAQSNGTLMKEKQQSSKSGHKKQKNKDREYYV) the chain is on the cytoplasmic side. A disordered region spans residues 1611-1643 (NSAQSNGTLMKEKQQSSKSGHKKQKNKDREYYV).

It belongs to the neurexin family. The laminin G-like domain 2 binds to NXPH1. Specific isoforms bind to alpha-dystroglycan. The cytoplasmic C-terminal region binds to CASK. Specific isoforms bind neuroligins NLGN1, NLGN2 and NLGN3. Interacts with CLSTN3. In terms of processing, O-glycosylated; contains heparan sulfate. Heparan sulfate attachment is required for synapse development by mediating interactions with neuroligins. In terms of tissue distribution, expressed in the blood vessel walls (at protein level). Highly expressed in brain, lung, and pancreas; a lower level of expression is detectable in heart, placenta, liver, and kidney, whereas no expression can be observed in skeletal muscle. Isoform 4a is heart-specific.

It localises to the presynaptic cell membrane. Functionally, neuronal cell surface protein that may be involved in cell recognition and cell adhesion. May mediate intracellular signaling. This chain is Neurexin-3 (NRXN3), found in Homo sapiens (Human).